Consider the following 619-residue polypeptide: Kinesin light chain 4 (619 aa).

N-acetylserine is present on Ser2. The TPR 1 repeat unit spans residues 55–88 (QQGGHEEGLVHEKARQLRRSMENIELGLSEAQVM). Positions 65 to 155 (HEKARQLRRS…HLEFLRQLRQ (91 aa)) form a coiled coil. Over residues 156 to 175 (YDEDGHGMEEKEGEATKDSL) the composition is skewed to basic and acidic residues. Residues 156 to 199 (YDEDGHGMEEKEGEATKDSLDDLFPNEEEEDSGNDLSRGQGAAA) form a disordered region. Ser174 carries the post-translational modification Phosphoserine. Residues 179 to 188 (FPNEEEEDSG) show a composition bias toward acidic residues. TPR repeat units lie at residues 211–244 (LRTL…LERT), 253–286 (ATML…REST), 295–328 (AATL…REKV), 337–370 (AKQL…YESQ), and 379–412 (ARTK…AHVQ). Ser460 bears the Phosphoserine mark. The stretch at 464 to 497 (NTTLKNLGALYRRQGKLEAAETLEECALRSRKQG) is one TPR 7 repeat. Ser565, Ser566, and Ser590 each carry phosphoserine. The interval 571–619 (RKLQGTEPRPSSSSMKRAASLNYLNQPNAAPLQVSRGLSASTVDLSSSS) is disordered. Residues 609-619 (SASTVDLSSSS) are compositionally biased toward low complexity. The residue at position 612 (Thr612) is a Phosphothreonine.

Belongs to the kinesin light chain family. In terms of assembly, oligomeric complex composed of two heavy chains and two light chains.

Its subcellular location is the cytoplasm. It is found in the cytoskeleton. In terms of biological role, kinesin is a microtubule-associated force-producing protein that may play a role in organelle transport. The light chain may function in coupling of cargo to the heavy chain or in the modulation of its ATPase activity. In Mus musculus (Mouse), this protein is Kinesin light chain 4 (Klc4).